A 347-amino-acid polypeptide reads, in one-letter code: NADH-ubiquinone oxidoreductase chain 2 (347 aa).

9 consecutive transmembrane segments (helical) span residues 5-22 (ILAI…MVLI), 26-45 (WLTI…PILM), 60-80 (FLTQ…NLLL), 150-170 (NPNL…WGGL), 178-198 (ILAY…TYNP), 200-220 (LMLL…MLFM), 237-257 (LPLI…LPPL), 274-294 (DMAI…YFYM), and 327-347 (PPLI…LTLF).

It belongs to the complex I subunit 2 family. In terms of assembly, core subunit of respiratory chain NADH dehydrogenase (Complex I) which is composed of 45 different subunits. Interacts with TMEM242.

The protein resides in the mitochondrion inner membrane. The catalysed reaction is a ubiquinone + NADH + 5 H(+)(in) = a ubiquinol + NAD(+) + 4 H(+)(out). Its function is as follows. Core subunit of the mitochondrial membrane respiratory chain NADH dehydrogenase (Complex I) which catalyzes electron transfer from NADH through the respiratory chain, using ubiquinone as an electron acceptor. Essential for the catalytic activity and assembly of complex I. The chain is NADH-ubiquinone oxidoreductase chain 2 from Martes zibellina (Sable).